A 137-amino-acid polypeptide reads, in one-letter code: Nucleoside diphosphate kinase (137 aa).

Residues lysine 9, phenylalanine 57, arginine 85, threonine 91, arginine 102, and asparagine 112 each coordinate ATP. The active-site Pros-phosphohistidine intermediate is the histidine 115.

Belongs to the NDK family. Homotetramer. The cofactor is Mg(2+).

Its subcellular location is the cytoplasm. The enzyme catalyses a 2'-deoxyribonucleoside 5'-diphosphate + ATP = a 2'-deoxyribonucleoside 5'-triphosphate + ADP. It catalyses the reaction a ribonucleoside 5'-diphosphate + ATP = a ribonucleoside 5'-triphosphate + ADP. In terms of biological role, major role in the synthesis of nucleoside triphosphates other than ATP. The ATP gamma phosphate is transferred to the NDP beta phosphate via a ping-pong mechanism, using a phosphorylated active-site intermediate. The polypeptide is Nucleoside diphosphate kinase (Pelobacter propionicus (strain DSM 2379 / NBRC 103807 / OttBd1)).